Consider the following 488-residue polypeptide: (Z)-2-((N-methylformamido)methylene)-5-hydroxybutyrolactone dehydrogenase (488 aa).

NAD(+) contacts are provided by residues 149 to 150 (WN) and 226 to 227 (GG). E248 serves as the catalytic Proton acceptor. Residue L249 participates in NAD(+) binding. C282 functions as the Nucleophile in the catalytic mechanism. E380 contributes to the NAD(+) binding site.

It belongs to the aldehyde dehydrogenase family. As to quaternary structure, homodimer.

The enzyme catalyses (Z)-2-((N-methylformamido)methylene)-5-hydroxybutanolactone + NAD(+) + H2O = (E)-2-((N-methylformamido) methylene)succinate + NADH + 3 H(+). Involved in the degradation of the pyridine ring of trigonelline (TG; N-methylnicotinate) into succinate and methylamine as carbon and nitrogen sources, respectively. Catalyzes the NAD(+)-dependent oxidation of (Z)-2-((N-methylformamido)methylene)-5-hydroxybutyrolactone (MFMB) to yield (E)-2-((N-methylformamido)methylene)succinate (MFMS). The protein is (Z)-2-((N-methylformamido)methylene)-5-hydroxybutyrolactone dehydrogenase of Acinetobacter baylyi (strain ATCC 33305 / BD413 / ADP1).